Here is a 275-residue protein sequence, read N- to C-terminus: Notch homolog 2 N-terminal-like protein B (275 aa).

The signal sequence occupies residues 1–25 (MPALRPALLWALLALWLCCATPAHA). 4 EGF-like domains span residues 26–63 (LQCRDGYEPCVNEGMCVTYHNGTGYCKCPEGFLGEYCQ), 64–102 (HRDPCEKNRCQNGGTCVAQAMLGKATCRCASGFTGEDCQ), 105–143 (TSHPCFVSRPCLNGGTCHMLSRDTYECTCQVGFTGKECQ), and 144–180 (WTDACLSHPCANGSTCTTVANQFSCKCLTGFTGQKCE). Disulfide bonds link Cys28–Cys41, Cys35–Cys51, Cys53–Cys62, Cys68–Cys79, Cys73–Cys90, Cys92–Cys101, Cys109–Cys121, Cys115–Cys131, Cys133–Cys142, Cys148–Cys159, Cys153–Cys168, Cys170–Cys179, Cys186–Cys198, Cys192–Cys207, Cys209–Cys218, Cys225–Cys236, and Cys230–Cys246. The N-linked (GlcNAc...) asparagine glycan is linked to Asn46. Asn155 carries an N-linked (GlcNAc...) asparagine glycan. The 38-residue stretch at 182–219 (DVNECDIPGHCQHGGICLNLPGSYQCQCLQGFTGQYCD) folds into the EGF-like 5; calcium-binding domain. The EGF-like 6 domain occupies 221-258 (LYVPCAPSPCVNGGTCRQTGDFTFECNCLPETVRRGTE).

Belongs to the NOTCH family. In terms of assembly, interacts with NOTCH2. Interacts with DLL1; the interaction is direct. In terms of tissue distribution, expressed in radial glia neural stem cells during cortical development.

The protein localises to the secreted. Functionally, human-specific protein that promotes neural progenitor proliferation and evolutionary expansion of the brain neocortex by regulating the Notch signaling pathway. Able to promote neural progenitor self-renewal, possibly by down-regulating neuronal differentiation genes, thereby delaying the differentiation of neuronal progenitors and leading to an overall final increase in neuronal production. Acts by enhancing the Notch signaling pathway via two different mechanisms that probably work in parallel to reach the same effect. Enhances Notch signaling pathway in a non-cell-autonomous manner via direct interaction with NOTCH2. Also promotes Notch signaling pathway in a cell-autonomous manner through inhibition of cis DLL1-NOTCH2 interactions, which promotes neuronal differentiation. This is Notch homolog 2 N-terminal-like protein B from Homo sapiens (Human).